Here is a 99-residue protein sequence, read N- to C-terminus: Integration host factor subunit alpha (99 aa).

A disordered region spans residues Phe49–Pro72.

It belongs to the bacterial histone-like protein family. As to quaternary structure, heterodimer of an alpha and a beta chain.

This protein is one of the two subunits of integration host factor, a specific DNA-binding protein that functions in genetic recombination as well as in transcriptional and translational control. The chain is Integration host factor subunit alpha from Escherichia coli O9:H4 (strain HS).